A 516-amino-acid polypeptide reads, in one-letter code: Nucleolar complex protein 4 homolog (516 aa).

3 consecutive transmembrane segments (helical) span residues 297-317 (ACDLGGALSLLALNGLFILIH), 347-367 (FFHLADLFLSSSHLPAYLVAA), and 375-395 (LALTAPPEALLMVLPFICNLL).

The protein belongs to the CBF/MAK21 family.

The protein localises to the nucleus membrane. It is found in the nucleus. It localises to the nucleolus. The protein is Nucleolar complex protein 4 homolog (NOC4L) of Homo sapiens (Human).